Here is a 251-residue protein sequence, read N- to C-terminus: MSEATALSPAEFEQALRAKGAYYHIYHPYHVAMYEGRATREQIQGWVANRFYYQVNIPLKDAAILANCPDREIRREWIQRLLDHDGAPGEDGGIEAWLRLGQAVGLDPDQLRSQELVLPGVRFAVDAYVNFARRANWQEAASSSLTELFAPQIHQSRLDSWPQHYPWIDPAGYEYFRTRLGQARRDVEHGLAITLQHYTTYEGQQRMLEILQFKLDILWSMLDAMSMAYELNRPPYHSVTDQKVWHKGITL.

Belongs to the PqqC family.

It catalyses the reaction 6-(2-amino-2-carboxyethyl)-7,8-dioxo-1,2,3,4,7,8-hexahydroquinoline-2,4-dicarboxylate + 3 O2 = pyrroloquinoline quinone + 2 H2O2 + 2 H2O + H(+). It functions in the pathway cofactor biosynthesis; pyrroloquinoline quinone biosynthesis. In terms of biological role, ring cyclization and eight-electron oxidation of 3a-(2-amino-2-carboxyethyl)-4,5-dioxo-4,5,6,7,8,9-hexahydroquinoline-7,9-dicarboxylic-acid to PQQ. The protein is Pyrroloquinoline-quinone synthase of Pseudomonas savastanoi pv. phaseolicola (strain 1448A / Race 6) (Pseudomonas syringae pv. phaseolicola (strain 1448A / Race 6)).